The chain runs to 346 residues: Methionine import ATP-binding protein MetN 1 (346 aa).

Positions 2-241 (IEFKQVTKTF…PQHPTTEKFV (240 aa)) constitute an ABC transporter domain. 38 to 45 (GFSGAGKS) provides a ligand contact to ATP.

The protein belongs to the ABC transporter superfamily. Methionine importer (TC 3.A.1.24) family. As to quaternary structure, the complex is composed of two ATP-binding proteins (MetN), two transmembrane proteins (MetI) and a solute-binding protein (MetQ).

Its subcellular location is the cell membrane. It catalyses the reaction L-methionine(out) + ATP + H2O = L-methionine(in) + ADP + phosphate + H(+). The catalysed reaction is D-methionine(out) + ATP + H2O = D-methionine(in) + ADP + phosphate + H(+). Its function is as follows. Part of the ABC transporter complex MetNIQ involved in methionine import. Responsible for energy coupling to the transport system. The polypeptide is Methionine import ATP-binding protein MetN 1 (Shouchella clausii (strain KSM-K16) (Alkalihalobacillus clausii)).